A 269-amino-acid chain; its full sequence is Formamidopyrimidine-DNA glycosylase (269 aa).

Pro2 functions as the Schiff-base intermediate with DNA in the catalytic mechanism. Residue Glu3 is the Proton donor of the active site. Residue Lys57 is the Proton donor; for beta-elimination activity of the active site. His90, Arg109, and Arg150 together coordinate DNA. An FPG-type zinc finger spans residues 235–269 (NVYGRKGEPCEACGKAIESKVIGQRNTFFCTRCQR). The Proton donor; for delta-elimination activity role is filled by Arg259.

Belongs to the FPG family. As to quaternary structure, monomer. It depends on Zn(2+) as a cofactor.

The enzyme catalyses Hydrolysis of DNA containing ring-opened 7-methylguanine residues, releasing 2,6-diamino-4-hydroxy-5-(N-methyl)formamidopyrimidine.. It catalyses the reaction 2'-deoxyribonucleotide-(2'-deoxyribose 5'-phosphate)-2'-deoxyribonucleotide-DNA = a 3'-end 2'-deoxyribonucleotide-(2,3-dehydro-2,3-deoxyribose 5'-phosphate)-DNA + a 5'-end 5'-phospho-2'-deoxyribonucleoside-DNA + H(+). Its function is as follows. Involved in base excision repair of DNA damaged by oxidation or by mutagenic agents. Acts as a DNA glycosylase that recognizes and removes damaged bases. Has a preference for oxidized purines, such as 7,8-dihydro-8-oxoguanine (8-oxoG). Has AP (apurinic/apyrimidinic) lyase activity and introduces nicks in the DNA strand. Cleaves the DNA backbone by beta-delta elimination to generate a single-strand break at the site of the removed base with both 3'- and 5'-phosphates. This is Formamidopyrimidine-DNA glycosylase from Alteromonas mediterranea (strain DSM 17117 / CIP 110805 / LMG 28347 / Deep ecotype).